Reading from the N-terminus, the 103-residue chain is Integration host factor subunit alpha (103 aa).

Belongs to the bacterial histone-like protein family. As to quaternary structure, heterodimer of an alpha and a beta chain.

In terms of biological role, this protein is one of the two subunits of integration host factor, a specific DNA-binding protein that functions in genetic recombination as well as in transcriptional and translational control. This is Integration host factor subunit alpha from Aromatoleum aromaticum (strain DSM 19018 / LMG 30748 / EbN1) (Azoarcus sp. (strain EbN1)).